The sequence spans 733 residues: Ribosomal protein S6 kinase alpha-2 (733 aa).

In terms of domain architecture, Protein kinase 1 spans 59 to 318 (FELLKVLGQG…VEEIKRHPFF (260 aa)). Residues 65–73 (LGQGSYGKV) and Lys-91 each bind ATP. The active-site Proton acceptor is Asp-184. Ser-218 is subject to Phosphoserine; by PDPK1. The 70-residue stretch at 319–388 (VTIDWNKLYR…VASSLVQEPS (70 aa)) folds into the AGC-kinase C-terminal domain. Ser-377 bears the Phosphoserine mark. One can recognise a Protein kinase 2 domain in the interval 415 to 672 (YEIKEDIGVG…AVQVLKHPWI (258 aa)). ATP-binding positions include 421–429 (IGVGSYSVC) and Lys-444. The Proton acceptor role is filled by Asp-532.

It belongs to the protein kinase superfamily. AGC Ser/Thr protein kinase family. S6 kinase subfamily. As to quaternary structure, forms a complex with either MAPK1/ERK2 or MAPK3/ERK1 in quiescent cells. Transiently dissociates following mitogenic stimulation. Interacts with FBXO5; cooperate to induce the metaphase arrest of early blastomeres; increases and stabilizes interaction of FBXO5 with CDC20. Mg(2+) is required as a cofactor. Post-translationally, activated by phosphorylation at Ser-218 by PDPK1. Autophosphorylated on Ser-377, as part of the activation process. May be phosphorylated at Thr-356 and Ser-360 by MAPK1/ERK2 and MAPK3/ERK1. N-terminal myristoylation results in an activated kinase in the absence of added growth factors.

It is found in the nucleus. The protein resides in the cytoplasm. The enzyme catalyses L-seryl-[protein] + ATP = O-phospho-L-seryl-[protein] + ADP + H(+). The catalysed reaction is L-threonyl-[protein] + ATP = O-phospho-L-threonyl-[protein] + ADP + H(+). With respect to regulation, upon extracellular signal or mitogen stimulation, phosphorylated at Thr-570 in the C-terminal kinase domain (CTKD) by MAPK1/ERK2 and MAPK3/ERK1. The activated CTKD then autophosphorylates Ser-377, allowing binding of PDPK1, which in turn phosphorylates Ser-218 in the N-terminal kinase domain (NTDK) leading to the full activation of the protein and subsequent phosphorylation of the substrates by the NTKD. Serine/threonine-protein kinase that acts downstream of ERK (MAPK1/ERK2 and MAPK3/ERK1) signaling and mediates mitogenic and stress-induced activation of transcription factors, regulates translation, and mediates cellular proliferation, survival, and differentiation. May function as tumor suppressor in epithelial ovarian cancer cells. In Mus musculus (Mouse), this protein is Ribosomal protein S6 kinase alpha-2 (Rps6ka2).